The following is a 155-amino-acid chain: Protein SprT-like (155 aa).

One can recognise a SprT-like domain in the interval 7–145; it reads QRHMEEVSLQ…GSCGGKLIQT (139 aa). Histidine 67 contributes to the Zn(2+) binding site. Residue glutamate 68 is part of the active site. Position 71 (histidine 71) interacts with Zn(2+).

Belongs to the SprT family. It depends on Zn(2+) as a cofactor.

The protein localises to the cytoplasm. The chain is Protein SprT-like from Listeria monocytogenes serotype 4b (strain CLIP80459).